The sequence spans 297 residues: Transcription factor bHLH129 (297 aa).

The segment at 1–145 is disordered; sequence MYPPNSSKST…SSSHQEHNSL (145 aa). S35 is modified (phosphoserine). A compositionally biased stretch (low complexity) spans 68 to 82; sequence SSIGFDSNASSSSSL. Gly residues predominate over residues 111-121; it reads PNGGYGGGGEQ. Phosphoserine is present on S138. One can recognise a bHLH domain in the interval 239–289; that stretch reads FATHPRSIAERERRTRISGKLKKLQELVPNMDKQTSYADMLDLAVEHIKGL.

In terms of assembly, homodimer.

It localises to the nucleus. This chain is Transcription factor bHLH129 (BHLH129), found in Arabidopsis thaliana (Mouse-ear cress).